Reading from the N-terminus, the 256-residue chain is 3-dehydroquinate dehydratase (256 aa).

Residues 46 to 48 (EWR) and arginine 82 contribute to the 3-dehydroquinate site. Residue histidine 144 is the Proton donor/acceptor of the active site. The Schiff-base intermediate with substrate role is filled by lysine 171. 3-dehydroquinate contacts are provided by arginine 213, serine 232, and glutamine 236.

This sequence belongs to the type-I 3-dehydroquinase family. Homodimer.

The catalysed reaction is 3-dehydroquinate = 3-dehydroshikimate + H2O. It functions in the pathway metabolic intermediate biosynthesis; chorismate biosynthesis; chorismate from D-erythrose 4-phosphate and phosphoenolpyruvate: step 3/7. Its function is as follows. Involved in the third step of the chorismate pathway, which leads to the biosynthesis of aromatic amino acids. Catalyzes the cis-dehydration of 3-dehydroquinate (DHQ) and introduces the first double bond of the aromatic ring to yield 3-dehydroshikimate. The sequence is that of 3-dehydroquinate dehydratase from Shouchella clausii (strain KSM-K16) (Alkalihalobacillus clausii).